The chain runs to 38 residues: MKRFLIGAGVAAVILSGWFIADHQTHSQEMKVAEKMIG.

Positions 1 to 33 (MKRFLIGAGVAAVILSGWFIADHQTHSQEMKVA) are excised as a propeptide.

It belongs to the Phr family. In terms of processing, contains a predicted signal peptide cleavage site in the N-terminal region, however the propeptide is probably subject to only one processing event, at the N-terminal end of the mature peptide.

It is found in the secreted. The protein resides in the cytoplasm. Signaling molecule involved in the regulation of expression of DegU-controlled genes. Secreted during production, but the mature peptide acts intracellularly, indicating that it needs to be imported into the cell to function. Stimulates the DegU-dependent expression of aprE, an extracellular alkaline protease. Acts by inhibiting RapG activity. At high concentrations, represses the DegS-dependent aprE expression. This is RapG inhibitor (phrG) from Bacillus subtilis (strain 168).